Reading from the N-terminus, the 512-residue chain is Maturase K (512 aa).

It belongs to the intron maturase 2 family. MatK subfamily.

It localises to the plastid. The protein localises to the chloroplast. Its function is as follows. Usually encoded in the trnK tRNA gene intron. Probably assists in splicing its own and other chloroplast group II introns. This Wolffiella gladiata (Florida mud-midget) protein is Maturase K.